The primary structure comprises 53 residues: UPF0391 membrane protein PputGB1_0151 (53 aa).

2 helical membrane-spanning segments follow: residues 4–24 (WAIT…GGIA) and 29–49 (GIAK…FFFG).

The protein belongs to the UPF0391 family.

It localises to the cell membrane. In Pseudomonas putida (strain GB-1), this protein is UPF0391 membrane protein PputGB1_0151.